Here is a 150-residue protein sequence, read N- to C-terminus: Anti-sigma F factor (150 aa).

This sequence belongs to the anti-sigma-factor family.

It carries out the reaction L-seryl-[protein] + ATP = O-phospho-L-seryl-[protein] + ADP + H(+). It catalyses the reaction L-threonyl-[protein] + ATP = O-phospho-L-threonyl-[protein] + ADP + H(+). In terms of biological role, binds to sigma F and blocks its ability to form an RNA polymerase holoenzyme (E-sigma F). Phosphorylates SpoIIAA on a serine residue. This phosphorylation may enable SpoIIAA to act as an anti-anti-sigma factor that counteracts SpoIIAB and thus releases sigma F from inhibition. The protein is Anti-sigma F factor of Pasteuria penetrans.